A 247-amino-acid chain; its full sequence is Cell division protein ZapD (247 aa).

The protein belongs to the ZapD family. As to quaternary structure, interacts with FtsZ.

Its subcellular location is the cytoplasm. Its function is as follows. Cell division factor that enhances FtsZ-ring assembly. Directly interacts with FtsZ and promotes bundling of FtsZ protofilaments, with a reduction in FtsZ GTPase activity. The sequence is that of Cell division protein ZapD from Enterobacter sp. (strain 638).